The sequence spans 660 residues: Putative ATP-dependent RNA helicase Pl10 (660 aa).

Acidic residues predominate over residues 1-11; sequence MSHVAEEDELG. The tract at residues 1–117 is disordered; sequence MSHVAEEDEL…SRGGRSGFGK (117 aa). The residue at position 2 (Ser-2) is an N-acetylserine. Residues 12–21 show a composition bias toward low complexity; that stretch reads LDQQLAGLDL. Over residues 24 to 34 the composition is skewed to polar residues; it reads RDSQSGGSTAS. The span at 44–66 shows a compositional bias: basic and acidic residues; it reads RNREAAKAFYDKDGSRWSKDKDA. An N6-acetyllysine modification is found at Lys-55. 3 positions are modified to phosphoserine: Ser-80, Ser-84, and Ser-89. Residues 93–103 show a composition bias toward basic and acidic residues; it reads GRFDERGRSDY. Residue Arg-100 is modified to Omega-N-methylarginine. The residue at position 101 (Ser-101) is a Phosphoserine. Tyr-103 carries the phosphotyrosine modification. Arg-109 carries the omega-N-methylarginine modification. N6-acetyllysine is present on Lys-117. The Q motif signature appears at 179-207; that stretch reads ESFSDVEMGEIIMGNIELTRYTRPTPVQK. Ser-182 is modified (phosphoserine). 199 to 206 is an ATP binding site; that stretch reads YTRPTPVQ. The Helicase ATP-binding domain occupies 210-402; that stretch reads IPIIKEKRDL…RDFLDEYIFL (193 aa). Lys-214 participates in a covalent cross-link: Glycyl lysine isopeptide (Lys-Gly) (interchain with G-Cter in SUMO2). Residue 223–230 participates in ATP binding; it reads AQTGSGKT. Positions 346–349 match the DEAD box motif; it reads DEAD. The Helicase C-terminal domain occupies 413-574; that stretch reads NITQKVVWVE…EVPSWLENMA (162 aa). The residue at position 455 (Ser-455) is a Phosphoserine. The residue at position 590 (Arg-590) is an Omega-N-methylarginine. Phosphoserine is present on residues Ser-592, Ser-603, and Ser-610. Residues 598-632 form a disordered region; sequence RDYRQSSGASSSSFSSGRASNSRSGGGSHGSSRGF. The span at 602-620 shows a compositional bias: low complexity; that stretch reads QSSGASSSSFSSGRASNSR. An omega-N-methylarginine mark is found at Arg-615 and Arg-630. Residues 621–632 show a composition bias toward gly residues; that stretch reads SGGGSHGSSRGF.

The protein belongs to the DEAD box helicase family. DDX3/DED1 subfamily. In terms of tissue distribution, testis.

The catalysed reaction is ATP + H2O = ADP + phosphate + H(+). Functionally, putative ATP-dependent RNA helicase. Possible role in a key step of the spermatogenic process. The sequence is that of Putative ATP-dependent RNA helicase Pl10 (D1Pas1) from Mus musculus (Mouse).